Here is a 334-residue protein sequence, read N- to C-terminus: Protein-methionine-sulfoxide reductase catalytic subunit MsrP (334 aa).

A signal peptide (tat-type signal) is located at residues 1-44; that stretch reads MKKNQFLKESDVTAESVFFMKRRQVLKALGISAAAFSLPHAAHA. Residues N88, 91-92, C146, T181, N233, R238, and 249-251 contribute to the Mo-molybdopterin site; these read YE and GIK.

Belongs to the MsrP family. As to quaternary structure, heterodimer of a catalytic subunit (MsrP) and a heme-binding subunit (MsrQ). The cofactor is Mo-molybdopterin. In terms of processing, predicted to be exported by the Tat system. The position of the signal peptide cleavage has not been experimentally proven.

It localises to the periplasm. It catalyses the reaction L-methionyl-[protein] + a quinone + H2O = L-methionyl-(S)-S-oxide-[protein] + a quinol. It carries out the reaction L-methionyl-[protein] + a quinone + H2O = L-methionyl-(R)-S-oxide-[protein] + a quinol. Part of the MsrPQ system that repairs oxidized periplasmic proteins containing methionine sulfoxide residues (Met-O), using respiratory chain electrons. Thus protects these proteins from oxidative-stress damage caused by reactive species of oxygen and chlorine generated by the host defense mechanisms. MsrPQ is essential for the maintenance of envelope integrity under bleach stress, rescuing a wide series of structurally unrelated periplasmic proteins from methionine oxidation, including the primary periplasmic chaperone SurA and the lipoprotein Pal. The catalytic subunit MsrP is non-stereospecific, being able to reduce both (R-) and (S-) diastereoisomers of methionine sulfoxide. The chain is Protein-methionine-sulfoxide reductase catalytic subunit MsrP from Escherichia coli O7:K1 (strain IAI39 / ExPEC).